Consider the following 333-residue polypeptide: Gramillins biosynthetic cluster protein FGSG_00039 (333 aa).

It functions in the pathway mycotoxin biosynthesis. In terms of biological role, part of the gene cluster that mediates the biosynthesis of gramillins A and B, bicyclic lipopeptides that induce cell death in maize leaves but not in wheat leaves. The nonribosomal peptide synthetase GRA1 incorporates respectively a glutamic adic (Glu), a leucine (Leu), a serine (Ser), a hydroxyglutamine (HOGln), a 2-amino decanoic acid, and 2 cysteins (CysB and CysA). The biosynthesis of 2-amino decanoic acid incorporated in gramillins could be initiated by a fatty acid synthase composed of the alpha and beta subunits FGSG_00036 and FGSG_11656. The cytochrome P450 monooxygenase FGSG_15680 could hydroxylate the fatty acid chain. Subsequent oxidation to the ketone by the oxidoreductase FGSG_00048 and transamination by aminotransferase FGSG_00049 could form 2-amino-decanoic acid. On the other hand, FGSG_15680 could also be responsible for the HO-modified glutamine at the gamma-position. Whether hydroxylation occurs on the fully assembled product or on the Gln residue prior to assembly into the gramillins requires further proof. The thioredoxin FGSG_00043 could also be required for the disulfide-bond formation between CysA and CysB. The specific involvement of the remaining proteins from the cluster is more difficult to discern, but could have broader regulatory (FGSG_00040 and FGSG_11657) or enzymatic functions (FGSG_00044 and FGSG_00045). The final C-domain of GRA1 does not possess the expected sequence of a termination CT domain, often implicated in macrocyclization and release of a cyclopeptidein fungal NRPs; and the thioesterase FGSG_00047 may act in concert with the terminal C-domain of GRA1 to catalyze the formation of the macrocyclic anhydride and release of the products. This Gibberella zeae (strain ATCC MYA-4620 / CBS 123657 / FGSC 9075 / NRRL 31084 / PH-1) (Wheat head blight fungus) protein is Gramillins biosynthetic cluster protein FGSG_00039.